We begin with the raw amino-acid sequence, 454 residues long: Asparagine--tRNA ligase (454 aa).

This sequence belongs to the class-II aminoacyl-tRNA synthetase family. As to quaternary structure, homodimer.

The protein localises to the cytoplasm. It carries out the reaction tRNA(Asn) + L-asparagine + ATP = L-asparaginyl-tRNA(Asn) + AMP + diphosphate + H(+). The protein is Asparagine--tRNA ligase of Ureaplasma urealyticum serovar 10 (strain ATCC 33699 / Western).